The sequence spans 253 residues: Snake venom serine proteinase 14 (253 aa).

An N-terminal signal peptide occupies residues 1–18 (MVLIRVLANLLILQLSYA). A propeptide spanning residues 19 to 24 (QKSSEL) is cleaved from the precursor. A Peptidase S1 domain is found at 25–244 (VIGGDECNIN…YTDWIQSIIA (220 aa)). Disulfide bonds link Cys31/Cys158, Cys49/Cys65, Cys93/Cys251, Cys137/Cys205, Cys169/Cys184, and Cys195/Cys220. Residues His64 and Asp105 each act as charge relay system in the active site. Residues Asn116, Asn117, and Asn149 are each glycosylated (N-linked (GlcNAc...) asparagine). The active-site Charge relay system is the Ser199.

Belongs to the peptidase S1 family. Snake venom subfamily. As to quaternary structure, monomer. In terms of tissue distribution, expressed by the venom gland.

The protein resides in the secreted. Functionally, snake venom serine protease that may act in the hemostasis system of the prey. The protein is Snake venom serine proteinase 14 of Crotalus adamanteus (Eastern diamondback rattlesnake).